The chain runs to 460 residues: Capsid vertex component 1 (460 aa).

Residues 167-197 form a disordered region; it reads VQNSTGQDHRSPVNDNNEHTVTPGPLEPPSV. The segment covering 173-184 has biased composition (basic and acidic residues); that stretch reads QDHRSPVNDNNE.

The protein belongs to the herpesviridae CVC1 protein family. Interacts (via C-terminus) with capsid vertex component 2/CVC2.

Its subcellular location is the virion. The protein resides in the host nucleus. In terms of biological role, capsid vertex-specific component that plays a role during viral DNA encapsidation, assuring correct genome cleavage and presumably stabilizing capsids that contain full-length viral genomes. The chain is Capsid vertex component 1 from Elephantid herpesvirus 1 (isolate Asian elephant/Berlin/Kiba/1998) (EIHV-1).